The following is a 377-amino-acid chain: Outer membrane porin N (377 aa).

The first 21 residues, 1–21 (MKSKVLALLIPALLAAGAAHA), serve as a signal peptide directing secretion. Polar residues predominate over residues 175-189 (NNEGASNGQEGTNNG). The tract at residues 175–196 (NNEGASNGQEGTNNGRDVRHEN) is disordered.

Belongs to the Gram-negative porin family. In terms of assembly, homotrimer.

The protein resides in the cell outer membrane. Its function is as follows. Forms pores that allow passive diffusion of small molecules across the outer membrane. Non-specific porin. In Escherichia coli (strain K12), this protein is Outer membrane porin N (ompN).